The sequence spans 113 residues: Nucleoid-associated protein CLJ_B0037 (113 aa).

Basic and acidic residues predominate over residues 93–102 (EEDTSSEVKR). The interval 93–113 (EEDTSSEVKRLTGGMNLPGMF) is disordered.

The protein belongs to the YbaB/EbfC family. As to quaternary structure, homodimer.

Its subcellular location is the cytoplasm. It is found in the nucleoid. Binds to DNA and alters its conformation. May be involved in regulation of gene expression, nucleoid organization and DNA protection. This chain is Nucleoid-associated protein CLJ_B0037, found in Clostridium botulinum (strain 657 / Type Ba4).